Consider the following 353-residue polypeptide: Serine/threonine-protein kinase SRK2G (353 aa).

The 257-residue stretch at 4 to 260 folds into the Protein kinase domain; sequence YDVVKDLGAG…LKEIKNHPWY (257 aa). ATP-binding positions include 10–18 and Lys33; that span reads LGAGNFGVA. The active-site Proton acceptor is Asp123. The segment at 299–353 is disordered; that stretch reads RNPAPSTSAVKSSGSGADEEEEEDVEAEVEEEEDDEDEYEKHVKEAQSCQESDKA. Polar residues predominate over residues 302–313; sequence APSTSAVKSSGS. The span at 315-336 shows a compositional bias: acidic residues; sequence ADEEEEEDVEAEVEEEEDDEDE. Residues 337 to 353 are compositionally biased toward basic and acidic residues; the sequence is YEKHVKEAQSCQESDKA.

Belongs to the protein kinase superfamily. Ser/Thr protein kinase family. In terms of tissue distribution, expressed in seedlings.

It localises to the nucleus. The enzyme catalyses L-seryl-[protein] + ATP = O-phospho-L-seryl-[protein] + ADP + H(+). The catalysed reaction is L-threonyl-[protein] + ATP = O-phospho-L-threonyl-[protein] + ADP + H(+). The chain is Serine/threonine-protein kinase SRK2G (SRK2G) from Arabidopsis thaliana (Mouse-ear cress).